Consider the following 1040-residue polypeptide: Multidrug resistance protein MdtB (1040 aa).

A run of 11 helical transmembrane segments spans residues 15 to 37 (LFILRPVATTLLMAAILLAGIIG), 345 to 362 (FELMLAIALVVMIIYLFL), 367 to 389 (ATIIPGVAVPLSLIGTFAVMVFL), 396 to 418 (LTLMALTIATGFVVDDAIVVIEN), 438 to 460 (GEIGFTIISLTFSLIAVLIPLLF), 472 to 494 (FAVTLAVAILISAVVSLTLTPMM), 535 to 557 (HPWLTLSVAFATLLLSVMLWIVI), 867 to 889 (VWLIVAAVVAMYIVLGVLYESFI), 909 to 931 (LIIAGSELDIIAIIGIILLIGIV), 968 to 990 (ILMTTLAALLGALPLMLSTGVGT), and 1000 to 1022 (MVGGLLVSQVLTLFTTPVIYLLF).

This sequence belongs to the resistance-nodulation-cell division (RND) (TC 2.A.6) family. MdtB subfamily. In terms of assembly, part of a tripartite efflux system composed of MdtA, MdtB and MdtC. MdtB forms a heteromultimer with MdtC.

The protein localises to the cell inner membrane. This chain is Multidrug resistance protein MdtB, found in Salmonella typhimurium (strain LT2 / SGSC1412 / ATCC 700720).